Here is a 343-residue protein sequence, read N- to C-terminus: Heat-inducible transcription repressor HrcA (343 aa).

Belongs to the HrcA family.

Functionally, negative regulator of class I heat shock genes (grpE-dnaK-dnaJ and groELS operons). Prevents heat-shock induction of these operons. The protein is Heat-inducible transcription repressor HrcA of Thermoanaerobacter sp. (strain X514).